A 359-amino-acid polypeptide reads, in one-letter code: Spore germination protein GerQC (359 aa).

The N-terminal stretch at 1–16 is a signal peptide; the sequence is MKRWILFLILSVFLIG. Residue Cys17 is the site of N-palmitoyl cysteine attachment. Residue Cys17 is the site of S-diacylglycerol cysteine attachment.

It belongs to the GerABKC lipoprotein family.

The protein resides in the membrane. Its function is as follows. Required for the germination response to inosine. Has no role in L-alanine germination. This is Spore germination protein GerQC (gerQC) from Bacillus cereus.